A 75-amino-acid chain; its full sequence is RNA-binding protein KhpA (75 aa).

In terms of domain architecture, KH spans 29–75 (SIIIELKVAPEDMGKVIGKQGRIAQAIRTLVKAAALKEKKRVIVEII).

This sequence belongs to the KhpA RNA-binding protein family. As to quaternary structure, forms a complex with KhpB.

The protein resides in the cytoplasm. A probable RNA chaperone. Forms a complex with KhpB which binds to cellular RNA and controls its expression. Plays a role in peptidoglycan (PG) homeostasis and cell length regulation. This is RNA-binding protein KhpA from Caldanaerobacter subterraneus subsp. tengcongensis (strain DSM 15242 / JCM 11007 / NBRC 100824 / MB4) (Thermoanaerobacter tengcongensis).